Consider the following 1803-residue polypeptide: Transposon Ty4-J Gag-Pol polyprotein (1803 aa).

The stretch at 39–115 (RKVSIKDEQV…IQLLETNENN (77 aa)) forms a coiled coil. Residues 382–502 (NNHLSPVQNE…KTKMVLSRKY (121 aa)) form a ty4 protease region. Catalysis depends on Asp-415, which acts as the For protease activity; shared with dimeric partner. An integrase-type zinc finger-like region spans residues 540-600 (AIKPTSSPGF…EPNEFWCQTC (61 aa)). Positions 620–787 (TDHEPGSSWC…LPLKAISRQP (168 aa)) constitute an Integrase catalytic domain. The Mg(2+) site is built by Asp-631 and Asp-696. Positions 1224 to 1250 (KRKRKRHDKNNSLTSYELERDKKRSKK) are disordered. The Reverse transcriptase Ty1/copia-type domain maps to 1376–1511 (RNMFMKTLDI…DILGMDLVYN (136 aa)). The Mg(2+) site is built by Asp-1384, Asp-1463, Asp-1464, Asp-1645, Glu-1687, and Asp-1721. The 147-residue stretch at 1645-1791 (DASVGSEYDA…KRFIQVLKNK (147 aa)) folds into the RNase H Ty1/copia-type domain.

In terms of assembly, the protease is a homodimer, whose active site consists of two apposed aspartic acid residues. Proteolytically processed into capsid protein (CA), Ty4 protease (PR), integrase (IN) and reverse transcriptase/ribonuclease H (RT) proteins. Initially, virus-like particles (VLPs) are composed of the structural unprocessed proteins Gag and Gag-Pol, and also contain the host initiator methionine tRNA (tRNA(i)-Met) which serves as a primer for minus-strand DNA synthesis, and a dimer of genomic Ty RNA. Processing of the polyproteins occurs within the particle and proceeds by an ordered pathway, called maturation. First, the protease (PR) is released by autocatalytic cleavage of the Gag-Pol polyprotein, and this cleavage is a prerequisite for subsequent processing at the remaining sites to release the mature structural and catalytic proteins. Maturation takes place prior to the RT reaction and is required to produce transposition-competent VLPs.

The protein resides in the cytoplasm. Its subcellular location is the nucleus. It carries out the reaction DNA(n) + a 2'-deoxyribonucleoside 5'-triphosphate = DNA(n+1) + diphosphate. The catalysed reaction is Endonucleolytic cleavage to 5'-phosphomonoester.. Functionally, capsid protein (CA) is the structural component of the virus-like particle (VLP), forming the shell that encapsulates the retrotransposons dimeric RNA genome. In terms of biological role, the aspartyl protease (PR) mediates the proteolytic cleavages of the Gag and Gag-Pol polyproteins after assembly of the VLP. Its function is as follows. Reverse transcriptase/ribonuclease H (RT) is a multifunctional enzyme that catalyzes the conversion of the retro-elements RNA genome into dsDNA within the VLP. The enzyme displays a DNA polymerase activity that can copy either DNA or RNA templates, and a ribonuclease H (RNase H) activity that cleaves the RNA strand of RNA-DNA heteroduplexes during plus-strand synthesis and hydrolyzes RNA primers. The conversion leads to a linear dsDNA copy of the retrotransposon that includes long terminal repeats (LTRs) at both ends. Integrase (IN) targets the VLP to the nucleus, where a subparticle preintegration complex (PIC) containing at least integrase and the newly synthesized dsDNA copy of the retrotransposon must transit the nuclear membrane. Once in the nucleus, integrase performs the integration of the dsDNA into the host genome. This is Transposon Ty4-J Gag-Pol polyprotein (TY4B-J) from Saccharomyces cerevisiae (strain ATCC 204508 / S288c) (Baker's yeast).